Reading from the N-terminus, the 149-residue chain is Urease accessory protein UreE (149 aa).

The protein belongs to the UreE family.

It is found in the cytoplasm. Functionally, involved in urease metallocenter assembly. Binds nickel. Probably functions as a nickel donor during metallocenter assembly. In Ruegeria pomeroyi (strain ATCC 700808 / DSM 15171 / DSS-3) (Silicibacter pomeroyi), this protein is Urease accessory protein UreE.